The sequence spans 82 residues: Vejovine (82 aa).

A signal peptide spans 1-22 (MNAKTLFVVFLIGMLVTEQVEA). A propeptide spanning residues 70-82 (MTLDEIVDAMYYD) is cleaved from the precursor.

Belongs to the non-disulfide-bridged peptide (NDBP) superfamily. Long chain multifunctional peptide (group 2) family. In terms of tissue distribution, expressed by the venom gland.

It localises to the secreted. It is found in the target cell membrane. In terms of biological role, displays significant potent antimicrobial activity against clinical isolates of Gram-negative multidrug resistant strains of E.coli, P.aeruginosa and A.baumanii with MIC values as low as 4.4 uM. Additionally, it displays low cytolytic and hemolytic activity against human erythrocytes reaching 50% hemolysis at 100 uM. This Vaejovis mexicanus (Mexican scorpion) protein is Vejovine.